Consider the following 452-residue polypeptide: Maltoporin (452 aa).

Residues 1–25 form the signal peptide; the sequence is MMITLRKLPLAVAVAAGVMSAQAMA.

This sequence belongs to the porin LamB (TC 1.B.3) family. As to quaternary structure, homotrimer formed of three 18-stranded antiparallel beta-barrels, containing three independent channels.

The protein localises to the cell outer membrane. It carries out the reaction beta-maltose(in) = beta-maltose(out). Its function is as follows. Involved in the transport of maltose and maltodextrins. This is Maltoporin from Salmonella choleraesuis (strain SC-B67).